The following is a 350-amino-acid chain: tRNA uridine(34) hydroxylase (350 aa).

Residues 146 to 240 form the Rhodanese domain; the sequence is DDPDAVFIDM…YARRAREQGL (95 aa). Catalysis depends on Cys-200, which acts as the Cysteine persulfide intermediate. A compositionally biased stretch (basic and acidic residues) spans 319-328; the sequence is RRRRAGRENG. Residues 319-350 are disordered; that stretch reads RRRRAGRENGNKIFNKSRGRLNSKLSIPDPAE.

The protein belongs to the TrhO family.

The enzyme catalyses uridine(34) in tRNA + AH2 + O2 = 5-hydroxyuridine(34) in tRNA + A + H2O. Its function is as follows. Catalyzes oxygen-dependent 5-hydroxyuridine (ho5U) modification at position 34 in tRNAs. This chain is tRNA uridine(34) hydroxylase, found in Salmonella dublin (strain CT_02021853).